The primary structure comprises 189 residues: Apolipoprotein D (189 aa).

Residues 1–20 form the signal peptide; sequence MVPVLLLLPALAGLFGAAEG. At Gln-21 the chain carries Pyrrolidone carboxylic acid. Intrachain disulfides connect Cys-28/Cys-134 and Cys-61/Cys-185. N-linked (GlcNAc...) asparagine glycosylation is found at Asn-65 and Asn-98.

Belongs to the calycin superfamily. Lipocalin family. Homodimer.

The protein localises to the secreted. Its function is as follows. APOD occurs in the macromolecular complex with lecithin-transport and binding of bilin. Appears to be able to transport a variety of ligands in a number of different contexts. In Bos taurus (Bovine), this protein is Apolipoprotein D (APOD).